A 204-amino-acid polypeptide reads, in one-letter code: Holliday junction branch migration complex subunit RuvA (204 aa).

The tract at residues 1 to 64 (MIGKLKGTIE…EDQIRLFGFM (64 aa)) is domain I. A domain II region spans residues 65-143 (AVLEREWFNL…AFAGEATNIG (79 aa)). Residues 144 to 151 (FKQELGEG) form a flexible linker region. Residues 152–204 (VAPAPVSDAVSALTNLGYSRDQAANAIAAAMKVAGDEADSAKLIRLGLKELSR) form a domain III region.

This sequence belongs to the RuvA family. In terms of assembly, homotetramer. Forms an RuvA(8)-RuvB(12)-Holliday junction (HJ) complex. HJ DNA is sandwiched between 2 RuvA tetramers; dsDNA enters through RuvA and exits via RuvB. An RuvB hexamer assembles on each DNA strand where it exits the tetramer. Each RuvB hexamer is contacted by two RuvA subunits (via domain III) on 2 adjacent RuvB subunits; this complex drives branch migration. In the full resolvosome a probable DNA-RuvA(4)-RuvB(12)-RuvC(2) complex forms which resolves the HJ.

It localises to the cytoplasm. Functionally, the RuvA-RuvB-RuvC complex processes Holliday junction (HJ) DNA during genetic recombination and DNA repair, while the RuvA-RuvB complex plays an important role in the rescue of blocked DNA replication forks via replication fork reversal (RFR). RuvA specifically binds to HJ cruciform DNA, conferring on it an open structure. The RuvB hexamer acts as an ATP-dependent pump, pulling dsDNA into and through the RuvAB complex. HJ branch migration allows RuvC to scan DNA until it finds its consensus sequence, where it cleaves and resolves the cruciform DNA. The protein is Holliday junction branch migration complex subunit RuvA of Rhizobium rhizogenes (strain K84 / ATCC BAA-868) (Agrobacterium radiobacter).